A 176-amino-acid chain; its full sequence is Ribosome maturation factor RimM (176 aa).

Residues 93–168 (DDEVYIEDIL…TIRITPPPGL (76 aa)) form the PRC barrel domain.

It belongs to the RimM family. Binds ribosomal protein uS19.

It localises to the cytoplasm. Its function is as follows. An accessory protein needed during the final step in the assembly of 30S ribosomal subunit, possibly for assembly of the head region. Essential for efficient processing of 16S rRNA. May be needed both before and after RbfA during the maturation of 16S rRNA. It has affinity for free ribosomal 30S subunits but not for 70S ribosomes. The sequence is that of Ribosome maturation factor RimM from Oleidesulfovibrio alaskensis (strain ATCC BAA-1058 / DSM 17464 / G20) (Desulfovibrio alaskensis).